A 96-amino-acid chain; its full sequence is Small ribosomal subunit protein bS18 (96 aa).

The segment covering 1-22 (MYKDIDSHQRDSRTDGHQDGFK) has biased composition (basic and acidic residues). A disordered region spans residues 1–25 (MYKDIDSHQRDSRTDGHQDGFKKNP).

This sequence belongs to the bacterial ribosomal protein bS18 family. In terms of assembly, part of the 30S ribosomal subunit. Forms a tight heterodimer with protein bS6.

Functionally, binds as a heterodimer with protein bS6 to the central domain of the 16S rRNA, where it helps stabilize the platform of the 30S subunit. This is Small ribosomal subunit protein bS18 from Borrelia duttonii (strain Ly).